The primary structure comprises 94 residues: MSNEIVDKLYKVILDRIEKRPTGSYTAEIVNKGKAYVARKVGEESVETIVASLAENKERFISEVADLIYHLLVLMALEGVTPDDIYRELERRRK.

It belongs to the PRA-PH family.

Its subcellular location is the cytoplasm. It catalyses the reaction 1-(5-phospho-beta-D-ribosyl)-ATP + H2O = 1-(5-phospho-beta-D-ribosyl)-5'-AMP + diphosphate + H(+). It functions in the pathway amino-acid biosynthesis; L-histidine biosynthesis; L-histidine from 5-phospho-alpha-D-ribose 1-diphosphate: step 2/9. This is Phosphoribosyl-ATP pyrophosphatase from Saccharolobus islandicus (strain Y.N.15.51 / Yellowstone #2) (Sulfolobus islandicus).